The following is a 126-amino-acid chain: Fluoride-specific ion channel FluC (126 aa).

Helical transmembrane passes span 7-27 (LWLA…VLLL), 36-56 (FPAA…LTLA), 74-94 (GVLG…GLLL), and 98-118 (GGLA…AAVA). Na(+)-binding residues include Gly77 and Thr80.

This sequence belongs to the fluoride channel Fluc/FEX (TC 1.A.43) family.

Its subcellular location is the cell membrane. It catalyses the reaction fluoride(in) = fluoride(out). Na(+) is not transported, but it plays an essential structural role and its presence is essential for fluoride channel function. Functionally, fluoride-specific ion channel. Important for reducing fluoride concentration in the cell, thus reducing its toxicity. The polypeptide is Fluoride-specific ion channel FluC (Deinococcus radiodurans (strain ATCC 13939 / DSM 20539 / JCM 16871 / CCUG 27074 / LMG 4051 / NBRC 15346 / NCIMB 9279 / VKM B-1422 / R1)).